The chain runs to 576 residues: Hemagglutinin-neuraminidase (576 aa).

Positions 1-10 (MDGDRGKRDS) are enriched in basic and acidic residues. Residues 1–24 (MDGDRGKRDSYWSTSPSGSTTKLA) form a disordered region. Residues 1–37 (MDGDRGKRDSYWSTSPSGSTTKLASGWERSSKVDTWL) lie on the Intravirion side of the membrane. The segment at 10–14 (SYWST) is incorporation in virion. Residues 11 to 23 (YWSTSPSGSTTKL) show a composition bias toward polar residues. The helical transmembrane segment at 38-58 (LILSFTQWALSIATVIICIII) threads the bilayer. Residues 59–140 (SARQGYSTKE…RQELTQLCES (82 aa)) form an involved in interaction with F protein region. Over 59–576 (SARQGYSTKE…SIPKLCKAES (518 aa)) the chain is Virion surface. Asn-77 carries N-linked (GlcNAc...) asparagine; by host glycosylation. Cystine bridges form between Cys-192–Cys-216, Cys-258–Cys-271, Cys-357–Cys-469, and Cys-463–Cys-473. The tract at residues 254-259 (NRKSCS) is involved in neuraminidase activity. N-linked (GlcNAc...) asparagine; by host glycans are attached at residues Asn-499 and Asn-511. An intrachain disulfide couples Cys-536 to Cys-545.

It belongs to the paramyxoviruses hemagglutinin-neuraminidase family. In terms of assembly, homotetramer; composed of disulfide-linked homodimers. Interacts with F protein trimer. In terms of processing, N-glycosylated; glycans consist of a mixture of high mannose-type oligosaccharides and of complex-type oligosaccharides.

It localises to the virion membrane. The protein localises to the host cell membrane. It catalyses the reaction Hydrolysis of alpha-(2-&gt;3)-, alpha-(2-&gt;6)-, alpha-(2-&gt;8)- glycosidic linkages of terminal sialic acid residues in oligosaccharides, glycoproteins, glycolipids, colominic acid and synthetic substrates.. In terms of biological role, attaches the virus to sialic acid-containing cell receptors and thereby initiating infection. Binding of HN protein to the receptor induces a conformational change that allows the F protein to trigger virion/cell membranes fusion. Functionally, neuraminidase activity ensures the efficient spread of the virus by dissociating the mature virions from the neuraminic acid containing glycoproteins. This chain is Hemagglutinin-neuraminidase (HN), found in Sendai virus (strain Harris) (SeV).